The sequence spans 389 residues: Chalcone synthase 1A (389 aa).

The active site involves cysteine 164.

This sequence belongs to the thiolase-like superfamily. Chalcone/stilbene synthases family.

The enzyme catalyses (E)-4-coumaroyl-CoA + 3 malonyl-CoA + 3 H(+) = 2',4,4',6'-tetrahydroxychalcone + 3 CO2 + 4 CoA. It functions in the pathway secondary metabolite biosynthesis; flavonoid biosynthesis. In terms of biological role, the primary product of this enzyme is 4,2',4',6'-tetrahydroxychalcone (also termed naringenin-chalcone or chalcone) which can under specific conditions spontaneously isomerize into naringenin. This chain is Chalcone synthase 1A (CHS-1A), found in Pisum sativum (Garden pea).